The chain runs to 362 residues: Aminomethyltransferase (362 aa).

It belongs to the GcvT family. The glycine cleavage system is composed of four proteins: P, T, L and H.

It catalyses the reaction N(6)-[(R)-S(8)-aminomethyldihydrolipoyl]-L-lysyl-[protein] + (6S)-5,6,7,8-tetrahydrofolate = N(6)-[(R)-dihydrolipoyl]-L-lysyl-[protein] + (6R)-5,10-methylene-5,6,7,8-tetrahydrofolate + NH4(+). Its function is as follows. The glycine cleavage system catalyzes the degradation of glycine. This Listeria monocytogenes serotype 4b (strain CLIP80459) protein is Aminomethyltransferase.